The sequence spans 166 residues: Ferric nitrobindin-like protein (166 aa).

The GXWXGXG signature appears at 21–27 (GHWEGEG).

It belongs to the nitrobindin family.

This Cutibacterium acnes (strain DSM 16379 / KPA171202) (Propionibacterium acnes) protein is Ferric nitrobindin-like protein.